Reading from the N-terminus, the 95-residue chain is Probable dolichol-phosphate mannosyltransferase subunit 3 (95 aa).

Transmembrane regions (helical) follow at residues 10–30 and 44–64; these read AHVI…VPVL and APFF…VYGV.

Belongs to the DPM3 family.

The protein localises to the endoplasmic reticulum membrane. Its pathway is protein modification; protein glycosylation. Stabilizer subunit of the dolichol-phosphate-mannose synthase complex. In Caenorhabditis elegans, this protein is Probable dolichol-phosphate mannosyltransferase subunit 3 (dpm-3).